The following is a 1010-amino-acid chain: Trifunctional purine biosynthetic protein adenosine-3 (1010 aa).

A2 carries the N-acetylalanine modification. Residue S10 is modified to Phosphoserine. In terms of domain architecture, ATP-grasp spans K111 to D318. Residues E190 to L193, E197, R220, and N229 each bind ATP. The Mg(2+) site is built by E288 and N290. The residue at position 350 (K350) is an N6-acetyllysine. The AIRS domain stretch occupies residues S434–R809. The residue at position 440 (S440) is a Phosphoserine. Phosphothreonine is present on T682. Phosphoserine occurs at positions 796 and 802. The interval V810–E1010 is GART domain. G818–N820 provides a ligand contact to N(1)-(5-phospho-beta-D-ribosyl)glycinamide. (6R)-10-formyltetrahydrofolate contacts are provided by residues R871, M896–L899, and N913. The active-site Proton donor is the H915. A947–D951 contacts (6R)-10-formyltetrahydrofolate. K977–E980 is a binding site for N(1)-(5-phospho-beta-D-ribosyl)glycinamide.

In the N-terminal section; belongs to the GARS family. The protein in the central section; belongs to the AIR synthase family. It in the C-terminal section; belongs to the GART family. As to quaternary structure, homodimer. It depends on Mg(2+) as a cofactor. Requires Mn(2+) as cofactor.

The enzyme catalyses 5-phospho-beta-D-ribosylamine + glycine + ATP = N(1)-(5-phospho-beta-D-ribosyl)glycinamide + ADP + phosphate + H(+). It carries out the reaction N(1)-(5-phospho-beta-D-ribosyl)glycinamide + (6R)-10-formyltetrahydrofolate = N(2)-formyl-N(1)-(5-phospho-beta-D-ribosyl)glycinamide + (6S)-5,6,7,8-tetrahydrofolate + H(+). The catalysed reaction is 2-formamido-N(1)-(5-O-phospho-beta-D-ribosyl)acetamidine + ATP = 5-amino-1-(5-phospho-beta-D-ribosyl)imidazole + ADP + phosphate + H(+). Its pathway is purine metabolism; IMP biosynthesis via de novo pathway; 5-amino-1-(5-phospho-D-ribosyl)imidazole from N(2)-formyl-N(1)-(5-phospho-D-ribosyl)glycinamide: step 2/2. The protein operates within purine metabolism; IMP biosynthesis via de novo pathway; N(1)-(5-phospho-D-ribosyl)glycinamide from 5-phospho-alpha-D-ribose 1-diphosphate: step 2/2. It participates in purine metabolism; IMP biosynthesis via de novo pathway; N(2)-formyl-N(1)-(5-phospho-D-ribosyl)glycinamide from N(1)-(5-phospho-D-ribosyl)glycinamide (10-formyl THF route): step 1/1. Functionally, trifunctional enzyme that catalyzes three distinct reactions as part of the 'de novo' inosine monophosphate biosynthetic pathway. This chain is Trifunctional purine biosynthetic protein adenosine-3 (GART), found in Homo sapiens (Human).